We begin with the raw amino-acid sequence, 575 residues long: Preprotein translocase subunit SCY2, chloroplastic (575 aa).

The N-terminal 34 residues, 1–34 (MNSSQACFFHFSLRPISLSHPSYAFLSKRDPFLC), are a transit peptide targeting the chloroplast. 10 helical membrane-spanning segments follow: residues 157-177 (FVTA…LPGF), 206-226 (LSLF…MQVL), 251-271 (IWWL…YTSL), 285-305 (VMMT…LCDT), 306-326 (ISES…ILTG), 346-366 (LPYL…AVVV), 414-434 (TTYL…PFLL), 447-467 (GAPP…FNIF), 509-529 (FWGG…DHYL), and 531-551 (SINQ…GSII).

The protein belongs to the SecY/SEC61-alpha family. Part of a second Sec protein translocation apparatus. Interacts probably with SECA2. As to expression, ubiquitous.

The protein localises to the plastid. The protein resides in the chloroplast membrane. Its subcellular location is the amyloplast membrane. It localises to the chloroplast thylakoid membrane. Its function is as follows. Involved in protein export. Probably interacts with other proteins to allow the postimport or conservative sorting pathway for inner membrane proteins in plastids. Central subunit of the protein translocation channel SecYE. Consists of two halves formed by TMs 1-5 and 6-10. These two domains form a lateral gate at the front which open onto the bilayer between TMs 2 and 7, and are clamped together by SecE at the back. The channel is closed by both a pore ring composed of hydrophobic SecY resides and a short helix (helix 2A) on the extracellular side of the membrane which forms a plug. This is Preprotein translocase subunit SCY2, chloroplastic (SCY2) from Arabidopsis thaliana (Mouse-ear cress).